Reading from the N-terminus, the 274-residue chain is Large ribosomal subunit protein uL2 (274 aa).

The tract at residues 223–264 (VAMNPVDHPHGGGEGRTSGGRHPVSPWGVPTKGYKTRSNKRT) is disordered.

Belongs to the universal ribosomal protein uL2 family. In terms of assembly, part of the 50S ribosomal subunit. Forms a bridge to the 30S subunit in the 70S ribosome.

In terms of biological role, one of the primary rRNA binding proteins. Required for association of the 30S and 50S subunits to form the 70S ribosome, for tRNA binding and peptide bond formation. It has been suggested to have peptidyltransferase activity; this is somewhat controversial. Makes several contacts with the 16S rRNA in the 70S ribosome. This Shewanella denitrificans (strain OS217 / ATCC BAA-1090 / DSM 15013) protein is Large ribosomal subunit protein uL2.